Here is a 366-residue protein sequence, read N- to C-terminus: Patr class I histocompatibility antigen, C alpha chain (366 aa).

The N-terminal stretch at 1 to 24 is a signal peptide; it reads MRVTAPRTLLLLLSGGLALTETWA. Positions 25–114 are alpha-1; sequence GSHSLRYFDT…LRGYYNQSED (90 aa). Residues 25–308 lie on the Extracellular side of the membrane; it reads GSHSLRYFDT…KPTSQPTIPI (284 aa). A glycan (N-linked (GlcNAc...) asparagine) is linked at Asn-110. The alpha-2 stretch occupies residues 115 to 206; it reads GSHTLQWMYG…ENGKETLQRT (92 aa). 2 disulfide bridges follow: Cys-125/Cys-192 and Cys-227/Cys-283. The tract at residues 207 to 298 is alpha-3; that stretch reads ECPKTHMTHH…GLPEPLTLRW (92 aa). Residues 209–297 form the Ig-like C1-type domain; the sequence is PKTHMTHHPV…EGLPEPLTLR (89 aa). A connecting peptide region spans residues 299-308; the sequence is KPTSQPTIPI. A helical membrane pass occupies residues 309 to 332; that stretch reads VGIVAGLAVLAVLAVLGAVVTAMM. Over 333–366 the chain is Cytoplasmic; the sequence is CRRKSSGGKGGSCSQAACSNSAQGSDESLIACKA. 2 positions are modified to phosphoserine: Ser-357 and Ser-360.

It belongs to the MHC class I family. In terms of assembly, heterodimer of an alpha chain and a beta chain (beta-2-microglobulin).

Its subcellular location is the membrane. Involved in the presentation of foreign antigens to the immune system. The protein is Patr class I histocompatibility antigen, C alpha chain of Pan troglodytes (Chimpanzee).